The primary structure comprises 98 residues: NADH-ubiquinone oxidoreductase chain 4L (98 aa).

A run of 3 helical transmembrane segments spans residues 1-21 (MTPTYMNIMLAFTISLLGMLT), 27-47 (VASLLCLEGMMMSLFIMATLI), and 61-81 (IILLVFAACETAVGLALLISI).

It belongs to the complex I subunit 4L family. Core subunit of respiratory chain NADH dehydrogenase (Complex I) which is composed of 45 different subunits.

The protein resides in the mitochondrion inner membrane. The catalysed reaction is a ubiquinone + NADH + 5 H(+)(in) = a ubiquinol + NAD(+) + 4 H(+)(out). Core subunit of the mitochondrial membrane respiratory chain NADH dehydrogenase (Complex I) which catalyzes electron transfer from NADH through the respiratory chain, using ubiquinone as an electron acceptor. Part of the enzyme membrane arm which is embedded in the lipid bilayer and involved in proton translocation. The sequence is that of NADH-ubiquinone oxidoreductase chain 4L (MT-ND4L) from Macaca fascicularis (Crab-eating macaque).